The chain runs to 89 residues: Glutamyl-tRNA(Gln) amidotransferase subunit C (89 aa).

It belongs to the GatC family. Heterotrimer of A, B and C subunits.

It catalyses the reaction L-glutamyl-tRNA(Gln) + L-glutamine + ATP + H2O = L-glutaminyl-tRNA(Gln) + L-glutamate + ADP + phosphate + H(+). The catalysed reaction is L-aspartyl-tRNA(Asn) + L-glutamine + ATP + H2O = L-asparaginyl-tRNA(Asn) + L-glutamate + ADP + phosphate + 2 H(+). In terms of biological role, allows the formation of correctly charged Asn-tRNA(Asn) or Gln-tRNA(Gln) through the transamidation of misacylated Asp-tRNA(Asn) or Glu-tRNA(Gln) in organisms which lack either or both of asparaginyl-tRNA or glutaminyl-tRNA synthetases. The reaction takes place in the presence of glutamine and ATP through an activated phospho-Asp-tRNA(Asn) or phospho-Glu-tRNA(Gln). The protein is Glutamyl-tRNA(Gln) amidotransferase subunit C of Thermus thermophilus (strain ATCC 27634 / DSM 579 / HB8).